A 587-amino-acid chain; its full sequence is Kelch-like protein 3 (587 aa).

The tract at residues 1–22 (MDGESIKPSSQPLIQTGDDEKN) is disordered. Position 10 is a phosphoserine (S10). Residues 50 to 117 (CDVMIVAEDV…IYTAEIEVTE (68 aa)) enclose the BTB domain. The BACK domain maps to 152-254 (CLGIRAFADV…PRDYLVQTVE (103 aa)). At T295 the chain carries Phosphothreonine. 6 Kelch repeats span residues 302 to 347 (VMIV…FMAG), 348 to 394 (HVYA…VLND), 396 to 441 (LYAV…VVEG), 442 to 490 (KLYA…VLSG), 491 to 537 (QLYA…AVNG), and 539 to 585 (LYVV…VIHK). T375 carries the phosphothreonine modification. A phosphoserine mark is found at S376 and S433.

The protein belongs to the KLHL3 family. Homodimer. Component of the BCR(KLHL3) E3 ubiquitin ligase complex, at least composed of CUL3 and KLHL3 and RBX1. Interacts with CLDN8. In terms of processing, phosphorylation at Ser-433 by PKA or PKC decreases the interaction with WNK1 and WNK4, leading to inhibit their degradation by the BCR(KLHL3) complex. Phosphorylated at Ser-433 by PKC in response to angiotensin II signaling, decreasing ability to promote degradation of WNK1 and WNK4, leading to activation of Na-Cl cotransporter SLC12A3/NCC. Phosphorylation at Ser-433 is increased by insulin. Dephosphorylated at Ser-433 by calcineurin PPP3CA, promoting degradation of WNK1 and WNK4.

The protein resides in the cytoplasm. It is found in the cytoskeleton. Its subcellular location is the cytosol. Its pathway is protein modification; protein ubiquitination. In terms of biological role, substrate-specific adapter of a BCR (BTB-CUL3-RBX1) E3 ubiquitin ligase complex that acts as a regulator of ion transport in the distal nephron. The BCR(KLHL3) complex acts by mediating ubiquitination and degradation of WNK1 and WNK4, two activators of Na-Cl cotransporter SLC12A3/NCC in distal convoluted tubule cells of kidney, thereby regulating NaCl reabsorption. The BCR(KLHL3) complex also mediates ubiquitination and degradation of WNK3. The BCR(KLHL3) complex also mediates ubiquitination of CLDN8, a tight-junction protein required for paracellular chloride transport in the kidney, leading to its degradation. This is Kelch-like protein 3 (KLHL3) from Bos taurus (Bovine).